We begin with the raw amino-acid sequence, 499 residues long: Protein-tyrosine sulfotransferase (499 aa).

The Cytoplasmic portion of the chain corresponds to 1 to 9 (MRLPYRNKK). Residues 10–30 (VTLWVLFGIIVITMFLFKFTE) traverse the membrane as a helical; Signal-anchor for type II membrane protein segment. The Lumenal segment spans residues 31 to 499 (LRPTCLFKVD…NIMEDPMADT (469 aa)). 80 to 84 (RSGTT) provides a ligand contact to 3'-phosphoadenylyl sulfate. C98 and C158 are oxidised to a cystine. The active-site Proton donor/acceptor is the E101. The interval 103–107 (RVIPR) is interaction with peptide substrate. Positions 185, 193, and 197 each coordinate 3'-phosphoadenylyl sulfate. A disulfide bridge links C227 with C235. 3'-phosphoadenylyl sulfate-binding positions include Y240, 287–296 (SSDQVIKPVN), and K302. N-linked (GlcNAc...) asparagine glycans are attached at residues N346 and N380. Disordered stretches follow at residues 362–460 (KQVL…QKPK) and 476–499 (NNIN…MADT). Composition is skewed to low complexity over residues 375-400 (TNTI…IIPE) and 408-434 (HVQQ…QQQQ). Residues 443 to 460 (EREAEPDREQQLLHQKPK) are compositionally biased toward basic and acidic residues. A compositionally biased stretch (low complexity) spans 476 to 491 (NNINNNINNNNNNNNI).

Belongs to the protein sulfotransferase family.

It is found in the golgi apparatus membrane. The enzyme catalyses L-tyrosyl-[protein] + 3'-phosphoadenylyl sulfate = O-sulfo-L-tyrosine-[protein] + adenosine 3',5'-bisphosphate + H(+). In terms of biological role, catalyzes the O-sulfation of tyrosine residues within acidic motifs of polypeptides. Has a role in protein secretion. The sequence is that of Protein-tyrosine sulfotransferase from Drosophila melanogaster (Fruit fly).